The sequence spans 70 residues: Small ribosomal subunit protein bS21 (70 aa).

It belongs to the bacterial ribosomal protein bS21 family.

In Laribacter hongkongensis (strain HLHK9), this protein is Small ribosomal subunit protein bS21.